Reading from the N-terminus, the 165-residue chain is Regulatory protein RecX (165 aa).

The protein belongs to the RecX family.

Its subcellular location is the cytoplasm. Its function is as follows. Modulates RecA activity. This chain is Regulatory protein RecX, found in Cronobacter sakazakii (strain ATCC BAA-894) (Enterobacter sakazakii).